The sequence spans 275 residues: F-box only protein 50 (275 aa).

The interval 1–67 (MEEVREGHAL…LPEPAQPSEA (67 aa)) is disordered. Over residues 26–62 (PPSPRSPSPPPSPPPLPSPPSLPSPAAPEAPELPEPA) the composition is skewed to pro residues. Residues serine 31, serine 37, and serine 49 each carry the phosphoserine modification. In terms of domain architecture, FBA spans 95–273 (LLLRRPLYRN…VTDSSVSVQL (179 aa)).

Expressed in the esophagus, oral cavity, skin, tongue and reproductive organs.

It localises to the cytoplasm. Functionally, promotes cell proliferation. The protein is F-box only protein 50 (NCCRP1) of Homo sapiens (Human).